The following is a 576-amino-acid chain: Proline--tRNA ligase (576 aa).

It belongs to the class-II aminoacyl-tRNA synthetase family. ProS type 1 subfamily. In terms of assembly, homodimer.

It localises to the cytoplasm. It carries out the reaction tRNA(Pro) + L-proline + ATP = L-prolyl-tRNA(Pro) + AMP + diphosphate. Catalyzes the attachment of proline to tRNA(Pro) in a two-step reaction: proline is first activated by ATP to form Pro-AMP and then transferred to the acceptor end of tRNA(Pro). As ProRS can inadvertently accommodate and process non-cognate amino acids such as alanine and cysteine, to avoid such errors it has two additional distinct editing activities against alanine. One activity is designated as 'pretransfer' editing and involves the tRNA(Pro)-independent hydrolysis of activated Ala-AMP. The other activity is designated 'posttransfer' editing and involves deacylation of mischarged Ala-tRNA(Pro). The misacylated Cys-tRNA(Pro) is not edited by ProRS. The chain is Proline--tRNA ligase from Bordetella pertussis (strain Tohama I / ATCC BAA-589 / NCTC 13251).